Consider the following 282-residue polypeptide: MPLLTQQIQDEDDQYSLVASLDNVRNLSTILKAIHFREHATCFATKNGIKVTVENAKCVQANAFIQAGIFQEFKVQEESVTFRINLTVLLDCLSIFGSSPMPGTLTALRMCYQGYGYPLMLFLEEGGVVTVCKINTQEPEETLDFDFCSTNVINKIILQSEGLREAFSELDMTSEVLQITMSPDKPYFRLSTFGNAGSSHLDYPKDSDLMEAFHCNQTQVNRYKISLLKPSTKALVLSCKVSIRTDNRGFLSLQYMIRNEDGQICFVEYYCCPDEEVPESES.

Belongs to the rad1 family. Component of the toroidal 9-1-1 (RAD9-RAD1-HUS1) complex, composed of RAD9A, RAD1 and HUS1. The 9-1-1 complex associates with LIG1, POLB, FEN1, RAD17, HDAC1, RPA1 and RPA2. The 9-1-1 complex associates with the RAD17-RFC complex. RAD1 interacts with POLB, FEN1, HUS1, HUS1B, RAD9A and RAD9B. Interacts with DNAJC7. Interacts with RHNO1; interaction is direct. Expressed in testis, uterus, bladder, spleen, ovaries, lung, brain and muscle (at protein level).

Its subcellular location is the nucleus. Its function is as follows. Component of the 9-1-1 cell-cycle checkpoint response complex that plays a major role in DNA repair. The 9-1-1 complex is recruited to DNA lesion upon damage by the RAD17-replication factor C (RFC) clamp loader complex. Acts then as a sliding clamp platform on DNA for several proteins involved in long-patch base excision repair (LP-BER). The 9-1-1 complex stimulates DNA polymerase beta (POLB) activity by increasing its affinity for the 3'-OH end of the primer-template and stabilizes POLB to those sites where LP-BER proceeds; endonuclease FEN1 cleavage activity on substrates with double, nick, or gap flaps of distinct sequences and lengths; and DNA ligase I (LIG1) on long-patch base excision repair substrates. The 9-1-1 complex is necessary for the recruitment of RHNO1 to sites of double-stranded breaks (DSB) occurring during the S phase. This is Cell cycle checkpoint protein RAD1 (RAD1) from Homo sapiens (Human).